The following is a 94-amino-acid chain: Potassium channel protein kcv (94 aa).

The helical transmembrane segment at Phe-14–Gly-34 threads the bilayer. Asn-38 carries N-linked (GlcNAc...) asparagine; by host glycosylation. The helical transmembrane segment at Thr-74–Leu-94 threads the bilayer.

It belongs to the two pore domain potassium channel (TC 1.A.1.12) family.

The protein localises to the membrane. Potassium-selective channel essential in the virus replication cycle. May be involved in preventing multiple infections (Potential). This chain is Potassium channel protein kcv (A250R), found in Paramecium bursaria Chlorella virus 1 (PBCV-1).